A 242-amino-acid chain; its full sequence is UPF0246 protein SPD_1378 (242 aa).

Belongs to the UPF0246 family.

The chain is UPF0246 protein SPD_1378 from Streptococcus pneumoniae serotype 2 (strain D39 / NCTC 7466).